A 362-amino-acid polypeptide reads, in one-letter code: tRNA/tmRNA (uracil-C(5))-methyltransferase (362 aa).

S-adenosyl-L-methionine contacts are provided by glutamine 186, tyrosine 214, asparagine 219, glutamate 235, and aspartate 295. Cysteine 320 functions as the Nucleophile in the catalytic mechanism. The active-site Proton acceptor is the glutamate 354.

Belongs to the class I-like SAM-binding methyltransferase superfamily. RNA M5U methyltransferase family. TrmA subfamily.

It carries out the reaction uridine(54) in tRNA + S-adenosyl-L-methionine = 5-methyluridine(54) in tRNA + S-adenosyl-L-homocysteine + H(+). The catalysed reaction is uridine(341) in tmRNA + S-adenosyl-L-methionine = 5-methyluridine(341) in tmRNA + S-adenosyl-L-homocysteine + H(+). In terms of biological role, dual-specificity methyltransferase that catalyzes the formation of 5-methyluridine at position 54 (m5U54) in all tRNAs, and that of position 341 (m5U341) in tmRNA (transfer-mRNA). The chain is tRNA/tmRNA (uracil-C(5))-methyltransferase from Dechloromonas aromatica (strain RCB).